Reading from the N-terminus, the 244-residue chain is Monothiol glutaredoxin-4 (244 aa).

Positions 3-110 (VVEIKSQDQF…FVKSLEILSN (108 aa)) constitute a Thioredoxin domain. The tract at residues 116-143 (ANNAKGPKSTSDEESSGSSDDEEDETEE) is disordered. Residues 127 to 143 (DEESSGSSDDEEDETEE) show a composition bias toward acidic residues. The Glutaredoxin domain maps to 146–244 (NARLVKLVQA…DPEYFQHALQ (99 aa)). Lys-163 is a binding site for glutathione. Cys-171 is a [2Fe-2S] cluster binding site. Glutathione is bound by residues Arg-200, Phe-212, and 225 to 226 (LD).

Belongs to the glutaredoxin family. Monothiol subfamily. In terms of assembly, homodimer. Heterodimer with FRA2.

Its function is as follows. Monothiol glutaredoxin involved in the biogenesis of iron-sulfur clusters. Binds one iron-sulfur cluster per dimer. The iron-sulfur cluster is bound between subunits, and is complexed by a bound glutathione and a cysteine residue from each subunit. The sequence is that of Monothiol glutaredoxin-4 (GRX4) from Saccharomyces cerevisiae (strain ATCC 204508 / S288c) (Baker's yeast).